Here is a 184-residue protein sequence, read N- to C-terminus: Cytidylate kinase (184 aa).

Residue 8–16 (GQPGSGKTT) coordinates ATP.

It belongs to the cytidylate kinase family. Type 2 subfamily.

The protein resides in the cytoplasm. The catalysed reaction is CMP + ATP = CDP + ADP. It catalyses the reaction dCMP + ATP = dCDP + ADP. This is Cytidylate kinase from Pyrobaculum neutrophilum (strain DSM 2338 / JCM 9278 / NBRC 100436 / V24Sta) (Thermoproteus neutrophilus).